We begin with the raw amino-acid sequence, 77 residues long: Small ribosomal subunit protein bS18 (77 aa).

This sequence belongs to the bacterial ribosomal protein bS18 family. Part of the 30S ribosomal subunit. Forms a tight heterodimer with protein bS6.

In terms of biological role, binds as a heterodimer with protein bS6 to the central domain of the 16S rRNA, where it helps stabilize the platform of the 30S subunit. This Lactobacillus gasseri (strain ATCC 33323 / DSM 20243 / BCRC 14619 / CIP 102991 / JCM 1131 / KCTC 3163 / NCIMB 11718 / NCTC 13722 / AM63) protein is Small ribosomal subunit protein bS18.